Here is a 373-residue protein sequence, read N- to C-terminus: 3-dehydroquinate synthase (373 aa).

NAD(+)-binding positions include 107–111, 131–132, K144, and K153; these read GVIGD and TS. The Zn(2+) site is built by E186, H249, and H267.

The protein belongs to the sugar phosphate cyclases superfamily. Dehydroquinate synthase family. Requires Co(2+) as cofactor. The cofactor is Zn(2+). It depends on NAD(+) as a cofactor.

It localises to the cytoplasm. It catalyses the reaction 7-phospho-2-dehydro-3-deoxy-D-arabino-heptonate = 3-dehydroquinate + phosphate. It functions in the pathway metabolic intermediate biosynthesis; chorismate biosynthesis; chorismate from D-erythrose 4-phosphate and phosphoenolpyruvate: step 2/7. Functionally, catalyzes the conversion of 3-deoxy-D-arabino-heptulosonate 7-phosphate (DAHP) to dehydroquinate (DHQ). The sequence is that of 3-dehydroquinate synthase from Ruegeria sp. (strain TM1040) (Silicibacter sp.).